Reading from the N-terminus, the 72-residue chain is uncharacterized protein (72 aa).

The signal sequence occupies residues 1-22 (MQSNFIFATLLVLLSLLTFTYA). Residues 23-28 (SGSSSM) are Extracellular-facing. Residues 29-49 (TSSSMPMFGGAIVAAFAFAIF) form a helical membrane-spanning segment. Topologically, residues 50–72 (SRLAQNFAPRAIFSLLPYHSVSC) are cytoplasmic.

The protein resides in the membrane. This is an uncharacterized protein from Dictyostelium discoideum (Social amoeba).